Reading from the N-terminus, the 210-residue chain is Thiamine-phosphate synthase (210 aa).

4-amino-2-methyl-5-(diphosphooxymethyl)pyrimidine is bound by residues 38–42 (QLREK) and Asn70. 2 residues coordinate Mg(2+): Asp71 and Asp90. A 4-amino-2-methyl-5-(diphosphooxymethyl)pyrimidine-binding site is contributed by Ser109. 2-[(2R,5Z)-2-carboxy-4-methylthiazol-5(2H)-ylidene]ethyl phosphate is bound at residue 139–141 (TPT). Lys142 is a 4-amino-2-methyl-5-(diphosphooxymethyl)pyrimidine binding site. 2-[(2R,5Z)-2-carboxy-4-methylthiazol-5(2H)-ylidene]ethyl phosphate is bound by residues Gly170 and 190 to 191 (VS).

Belongs to the thiamine-phosphate synthase family. Mg(2+) is required as a cofactor.

The catalysed reaction is 2-[(2R,5Z)-2-carboxy-4-methylthiazol-5(2H)-ylidene]ethyl phosphate + 4-amino-2-methyl-5-(diphosphooxymethyl)pyrimidine + 2 H(+) = thiamine phosphate + CO2 + diphosphate. It carries out the reaction 2-(2-carboxy-4-methylthiazol-5-yl)ethyl phosphate + 4-amino-2-methyl-5-(diphosphooxymethyl)pyrimidine + 2 H(+) = thiamine phosphate + CO2 + diphosphate. It catalyses the reaction 4-methyl-5-(2-phosphooxyethyl)-thiazole + 4-amino-2-methyl-5-(diphosphooxymethyl)pyrimidine + H(+) = thiamine phosphate + diphosphate. The protein operates within cofactor biosynthesis; thiamine diphosphate biosynthesis; thiamine phosphate from 4-amino-2-methyl-5-diphosphomethylpyrimidine and 4-methyl-5-(2-phosphoethyl)-thiazole: step 1/1. Functionally, condenses 4-methyl-5-(beta-hydroxyethyl)thiazole monophosphate (THZ-P) and 2-methyl-4-amino-5-hydroxymethyl pyrimidine pyrophosphate (HMP-PP) to form thiamine monophosphate (TMP). The sequence is that of Thiamine-phosphate synthase from Leptospira biflexa serovar Patoc (strain Patoc 1 / Ames).